Here is a 237-residue protein sequence, read N- to C-terminus: Ribosomal RNA small subunit methyltransferase G (237 aa).

S-adenosyl-L-methionine contacts are provided by residues Gly78, Phe83, 129-130 (AE), and Arg148.

Belongs to the methyltransferase superfamily. RNA methyltransferase RsmG family.

The protein resides in the cytoplasm. Specifically methylates the N7 position of a guanine in 16S rRNA. The protein is Ribosomal RNA small subunit methyltransferase G of Streptococcus equi subsp. zooepidemicus (strain MGCS10565).